A 209-amino-acid chain; its full sequence is MTLHTAELKQGLAQLALELTEPQVELLQRYLALLVKWNQTYNLTAIRQEERMVSYHLLDSLSLVPHLAGGTRMLDVGSGGGMPGIPTAIARPDLQVALLDSNHKKTTFLRQVVLELGLPNVQVVTDRVEAYQPEQKFDRITSRAFSELSEFVKLTRHLMADDGQYVAMKGVYPYEEIALLPQGVAVSEVLPVTVPGLDAERHLVRMVLQ.

S-adenosyl-L-methionine contacts are provided by residues glycine 77, methionine 82, 128–129, and arginine 143; that span reads VE.

Belongs to the methyltransferase superfamily. RNA methyltransferase RsmG family.

It localises to the cytoplasm. It carries out the reaction guanosine(527) in 16S rRNA + S-adenosyl-L-methionine = N(7)-methylguanosine(527) in 16S rRNA + S-adenosyl-L-homocysteine. Its function is as follows. Specifically methylates the N7 position of guanine in position 527 of 16S rRNA. This Chromobacterium violaceum (strain ATCC 12472 / DSM 30191 / JCM 1249 / CCUG 213 / NBRC 12614 / NCIMB 9131 / NCTC 9757 / MK) protein is Ribosomal RNA small subunit methyltransferase G.